A 238-amino-acid polypeptide reads, in one-letter code: TATA-box-binding protein (238 aa).

Residues 1 to 58 (MDLKLPPTNPTNPQQAKTFMKSIEEDEKNKAEDLDIIKKEDIDEPKQEDTTDGNGGGG) are disordered. Residues 27-49 (EKNKAEDLDIIKKEDIDEPKQED) are compositionally biased toward basic and acidic residues. 2 tandem repeats follow at residues 65 to 141 (LQNI…ARII) and 155 to 232 (IQNI…YPVL).

This sequence belongs to the TBP family. As to quaternary structure, belongs to the TFIID complex together with the TBP-associated factors (TAFs). Binds DNA as monomer.

The protein resides in the nucleus. Its function is as follows. General transcription factor that functions at the core of the DNA-binding multiprotein factor TFIID. Binding of TFIID to the TATA box is the initial transcriptional step of the pre-initiation complex (PIC), playing a role in the activation of eukaryotic genes transcribed by RNA polymerase II. This chain is TATA-box-binding protein (TBP1), found in Candida albicans (strain SC5314 / ATCC MYA-2876) (Yeast).